The following is a 116-amino-acid chain: U16-barytoxin-Tl1c (116 aa).

The signal sequence occupies residues 1-20 (MKTIIVFLSLLVLATKFGDA). The propeptide occupies 21-74 (NEGVNQEQMKEVIQNEFREDFLNEMAAMSLLQQLEAIESTLLEKEADRNSRQKR). 3 disulfide bridges follow: C75-C90, C82-C95, and C89-C110.

Belongs to the neurotoxin 14 (magi-1) family. 06 (ICK-Trit) subfamily. In terms of tissue distribution, expressed by the venom gland.

It is found in the secreted. Ion channel inhibitor. The polypeptide is U16-barytoxin-Tl1c (Trittame loki (Brush-footed trapdoor spider)).